Consider the following 481-residue polypeptide: Histidine--tRNA ligase, cytoplasmic (481 aa).

A disordered region spans residues 1 to 48 (MSEPVVDNVTNKVEKMEVKEKTSAPPKEKKEKKSNKVQLKTPKGTQDY). Over residues 12 to 31 (KVEKMEVKEKTSAPPKEKKE) the composition is skewed to basic and acidic residues.

Belongs to the class-II aminoacyl-tRNA synthetase family.

Its subcellular location is the cytoplasm. It catalyses the reaction tRNA(His) + L-histidine + ATP = L-histidyl-tRNA(His) + AMP + diphosphate + H(+). The sequence is that of Histidine--tRNA ligase, cytoplasmic (hisS) from Dictyostelium discoideum (Social amoeba).